A 416-amino-acid chain; its full sequence is MIFDKEDYKAFDPELWNAIDAEAERQQNNIELIASENVVSKAVMAAQGTLLTNKYAEGYPGKRYYGGTAVIDVVETLAIERAKKLFGVKFANVQPHSGSQANAAVYMSLIQPGDTVMGMDLSAGGHLTHGAPVSFSGKTYNFVSYNVDKESELLDYDAILAQAKEVRPKLIVAGASAYSRIIDFAKFREIADAVGAYLMVDMAHIAGLVASGHHPSPVPYAHVTTTTTHKTLRGPRGGLILTDDEDIAKKLNSAVFPGLQGGPLEHVIAAKAVALKEALDPAFKEYGENVIKNAAAMADVFNQHPDFRVISGGTNNHLFLVDVTKVVENGKVAQNVLEEVNITLNKNSIPYEQLSPFKTSGIRVGSPAITSRGMGEAESRQIAEWMVEALENHDKPEVLERIRGDVKVLTDAFPLY.

(6S)-5,6,7,8-tetrahydrofolate is bound by residues leucine 121 and glycine 125 to leucine 127. Lysine 230 is subject to N6-(pyridoxal phosphate)lysine. Residue serine 355–phenylalanine 357 participates in (6S)-5,6,7,8-tetrahydrofolate binding.

It belongs to the SHMT family. Homodimer. It depends on pyridoxal 5'-phosphate as a cofactor.

The protein localises to the cytoplasm. The enzyme catalyses (6R)-5,10-methylene-5,6,7,8-tetrahydrofolate + glycine + H2O = (6S)-5,6,7,8-tetrahydrofolate + L-serine. Its pathway is one-carbon metabolism; tetrahydrofolate interconversion. It functions in the pathway amino-acid biosynthesis; glycine biosynthesis; glycine from L-serine: step 1/1. Its function is as follows. Catalyzes the reversible interconversion of serine and glycine with tetrahydrofolate (THF) serving as the one-carbon carrier. This reaction serves as the major source of one-carbon groups required for the biosynthesis of purines, thymidylate, methionine, and other important biomolecules. Also exhibits THF-independent aldolase activity toward beta-hydroxyamino acids, producing glycine and aldehydes, via a retro-aldol mechanism. This chain is Serine hydroxymethyltransferase, found in Streptococcus thermophilus (strain ATCC BAA-250 / LMG 18311).